A 143-amino-acid polypeptide reads, in one-letter code: Large ribosomal subunit protein uL16c (143 aa).

This sequence belongs to the universal ribosomal protein uL16 family. As to quaternary structure, part of the 50S ribosomal subunit.

Its subcellular location is the plastid. The protein resides in the chloroplast. The protein is Large ribosomal subunit protein uL16c of Chlorokybus atmophyticus (Soil alga).